Reading from the N-terminus, the 103-residue chain is Signal recognition particle 19 kDa protein (103 aa).

The protein belongs to the SRP19 family. In terms of assembly, part of the signal recognition particle protein translocation system, which is composed of SRP and FtsY. Archaeal SRP consists of a 7S RNA molecule of 300 nucleotides and two protein subunits: SRP54 and SRP19.

It is found in the cytoplasm. Functionally, involved in targeting and insertion of nascent membrane proteins into the cytoplasmic membrane. Binds directly to 7S RNA and mediates binding of the 54 kDa subunit of the SRP. This chain is Signal recognition particle 19 kDa protein, found in Methanopyrus kandleri (strain AV19 / DSM 6324 / JCM 9639 / NBRC 100938).